The following is a 76-amino-acid chain: MHGTHFLILLLLCGVLGSNGVTPDIKNVAKAERNMHNMLRCLKKNEPIVKSRILTLPPNCNQYVSAVVETWKPEGV.

The first 20 residues, 1-20 (MHGTHFLILLLLCGVLGSNG), serve as a signal peptide directing secretion.

In terms of processing, cAMP-dependent phosphorylation. Lumen fluid of male accessory glands, becomes seminal fluid.

Its subcellular location is the secreted. Transferred from male to female during mating and may affect egglaying and behavior after mating. The protein is Accessory gland-specific peptide 57Dc (Mst57Dc) of Drosophila melanogaster (Fruit fly).